We begin with the raw amino-acid sequence, 471 residues long: MNAAGGGSGSQAAGAAGVNSSLSHNALLSTASGATTMPMAQLADGWLELESDPGLFTLLLKDFGCHDVQVEEVYDLQKPIESPYGFIFLFRWIEERRARRKIVETTAEIFVKDEEAISSIFFAQQVVPNSCATHALLSVLLNCNENNLQLGDTLSRLKAHTKGMSPENKGLAIGNTPELACAHNSHAMPQARRRLERTGAGVSSCRFTGEAFHFVSFVPINGQLFELDGLKPYPMNHGGWEDSEDWTDKFRRVMAERLGIATGEQDIRFNLMAVVPDRRIAITHKLKMLRTNQAIVSGTLQKLLKADEQGESGNGDSQRPDTPTTLLEPSAFTARDLQSLLKNLDTEIAINEQHLADENDRRHMFKVDASRRTHNYDKFICTFLSMLAHQGVLGELVSQHLLPSKKVSGQGAANRISKQSTTASAGGSTTGATASTPKTQQQQAAAAKNGKSPSKTPGRRRKGRNKCRKRK.

The 232-residue stretch at 45–276 (GWLELESDPG…IRFNLMAVVP (232 aa)) folds into the UCH catalytic domain. Cys131 acts as the Nucleophile in catalysis. His213 (proton donor) is an active-site residue. The region spanning 375–403 (NYDKFICTFLSMLAHQGVLGELVSQHLLP) is the ULD domain. The segment at 405-471 (KKVSGQGAAN…KGRNKCRKRK (67 aa)) is positively charged C-terminal tail required for binding nucleosomes. Residues 410-471 (QGAANRISKQ…KGRNKCRKRK (62 aa)) form a disordered region. The span at 420-447 (STTASAGGSTTGATASTPKTQQQQAAAA) shows a compositional bias: low complexity. The span at 457–471 (PGRRRKGRNKCRKRK) shows a compositional bias: basic residues.

Belongs to the peptidase C12 family. BAP1 subfamily. Catalytic component of the polycomb repressive deubiquitinase (PR-DUB) complex, at least composed of caly/calypso, Asx and sba (MBD5/6 homolog). The PR-DUB complex associates with nucleosomes to mediate deubiquitination of histone H2AK118ub1 substrates; the association requires the positively charged C-terminal tail of caly, probably due to direct binding of DNA. Interacts (via ULD domain) with Asx (via DEUBAD domain); the interaction produces a stable heterodimer with a composite binding site for ubiquitin. Homodimerizes (via coiled-coil hinge-region between the UCH and ULD domains) to mediate assembly of 2 copies of the caly-Asx heterodimer into a bisymmetric tetramer; dimerization enhances PR-DUB association with nucleosomes.

The protein resides in the nucleus. It catalyses the reaction Thiol-dependent hydrolysis of ester, thioester, amide, peptide and isopeptide bonds formed by the C-terminal Gly of ubiquitin (a 76-residue protein attached to proteins as an intracellular targeting signal).. In terms of biological role, catalytic component of the polycomb repressive deubiquitinase (PR-DUB) complex, a complex that specifically mediates deubiquitination of histone H2A monoubiquitinated at 'Lys-119' (H2AK118ub1). Mediates bisymmetric organization of the PR-DUB complex and is involved in association with nucleosomes to mediate deubiquitination. Does not deubiquitinate monoubiquitinated histone H2B. Required to maintain the transcriptionally repressive state of homeotic genes throughout development. The PR-DUB complex has weak or no activity toward 'Lys-48'- and 'Lys-63'-linked polyubiquitin chains. Polycomb group (PcG) protein. The protein is Ubiquitin carboxyl-terminal hydrolase calypso of Drosophila yakuba (Fruit fly).